Consider the following 199-residue polypeptide: 5'-deoxynucleotidase HDDC2 (199 aa).

Alanine 2 is modified (N-acetylalanine). Serine 5 carries the phosphoserine modification. The HD domain occupies 41-143; it reads VSDHMYRMAV…VKQLDQCEMI (103 aa). Positions 44, 72, 73, 76, 81, 82, and 138 each coordinate a divalent metal cation. Serine 199 carries the phosphoserine modification.

Belongs to the HDDC2 family. Homodimer. The cofactor is Mn(2+). Co(2+) is required as a cofactor. Mg(2+) serves as cofactor.

It carries out the reaction a 2'-deoxyribonucleoside 5'-phosphate + H2O = a 2'-deoxyribonucleoside + phosphate. Functionally, catalyzes the dephosphorylation of the nucleoside 5'-monophosphates deoxyadenosine monophosphate (dAMP), deoxycytidine monophosphate (dCMP), deoxyguanosine monophosphate (dGMP) and deoxythymidine monophosphate (dTMP). The protein is 5'-deoxynucleotidase HDDC2 (Hddc2) of Mus musculus (Mouse).